The following is a 180-amino-acid chain: Formate hydrogenlyase subunit 6 (180 aa).

4Fe-4S ferredoxin-type domains are found at residues 31–60 (GKPE…VETD) and 66–95 (LAWE…LSQE). [4Fe-4S] cluster contacts are provided by cysteine 40, cysteine 43, cysteine 46, cysteine 50, cysteine 75, cysteine 78, cysteine 81, and cysteine 85.

FHL comprises of a formate dehydrogenase, unidentified electron carriers and a hydrogenase (isoenzyme 3). In this non-energy conserving pathway, molecular hydrogen and carbodioxide are released from formate.

Probable electron transfer protein for hydrogenase 3. The protein is Formate hydrogenlyase subunit 6 (hycF) of Escherichia coli (strain K12).